The chain runs to 135 residues: Kappa-casein (135 aa).

A glycan (O-linked (GalNAc...) threonine) is linked at threonine 96. At serine 114 the chain carries Phosphoserine; alternate. Serine 114 carries an O-linked (GalNAc...) serine; alternate glycan. The O-linked (GalNAc...) threonine glycan is linked to threonine 131. Serine 132 carries the post-translational modification Phosphoserine.

Belongs to the kappa-casein family. As to expression, mammary gland specific. Secreted in milk.

It is found in the secreted. Functionally, kappa-casein stabilizes micelle formation, preventing casein precipitation in milk. The chain is Kappa-casein (CSN3) from Equus grevyi (Grevy's zebra).